The primary structure comprises 206 residues: N-(5'-phosphoribosyl)anthranilate isomerase (206 aa).

The protein belongs to the TrpF family.

The catalysed reaction is N-(5-phospho-beta-D-ribosyl)anthranilate = 1-(2-carboxyphenylamino)-1-deoxy-D-ribulose 5-phosphate. It functions in the pathway amino-acid biosynthesis; L-tryptophan biosynthesis; L-tryptophan from chorismate: step 3/5. In Pseudomonas syringae pv. tomato (strain ATCC BAA-871 / DC3000), this protein is N-(5'-phosphoribosyl)anthranilate isomerase.